The chain runs to 428 residues: Kynureninase (428 aa).

Residues threonine 104, threonine 105, 132–135, aspartate 213, histidine 216, and tyrosine 238 each bind pyridoxal 5'-phosphate; that span reads FPSD. Lysine 239 bears the N6-(pyridoxal phosphate)lysine mark. The pyridoxal 5'-phosphate site is built by tryptophan 267 and threonine 295.

This sequence belongs to the kynureninase family. As to quaternary structure, homodimer. Requires pyridoxal 5'-phosphate as cofactor.

The catalysed reaction is L-kynurenine + H2O = anthranilate + L-alanine + H(+). It carries out the reaction 3-hydroxy-L-kynurenine + H2O = 3-hydroxyanthranilate + L-alanine + H(+). It functions in the pathway amino-acid degradation; L-kynurenine degradation; L-alanine and anthranilate from L-kynurenine: step 1/1. It participates in cofactor biosynthesis; NAD(+) biosynthesis; quinolinate from L-kynurenine: step 2/3. Its function is as follows. Catalyzes the cleavage of L-kynurenine (L-Kyn) and L-3-hydroxykynurenine (L-3OHKyn) into anthranilic acid (AA) and 3-hydroxyanthranilic acid (3-OHAA), respectively. The sequence is that of Kynureninase from Bacillus cereus (strain ATCC 14579 / DSM 31 / CCUG 7414 / JCM 2152 / NBRC 15305 / NCIMB 9373 / NCTC 2599 / NRRL B-3711).